Here is a 494-residue protein sequence, read N- to C-terminus: UPF0371 protein SSA_0208 (494 aa).

It belongs to the UPF0371 family.

The polypeptide is UPF0371 protein SSA_0208 (Streptococcus sanguinis (strain SK36)).